A 226-amino-acid polypeptide reads, in one-letter code: Urease accessory protein UreF (226 aa).

The protein belongs to the UreF family. As to quaternary structure, ureD, UreF and UreG form a complex that acts as a GTP-hydrolysis-dependent molecular chaperone, activating the urease apoprotein by helping to assemble the nickel containing metallocenter of UreC. The UreE protein probably delivers the nickel.

The protein localises to the cytoplasm. In terms of biological role, required for maturation of urease via the functional incorporation of the urease nickel metallocenter. The polypeptide is Urease accessory protein UreF (Burkholderia cenocepacia (strain ATCC BAA-245 / DSM 16553 / LMG 16656 / NCTC 13227 / J2315 / CF5610) (Burkholderia cepacia (strain J2315))).